Here is a 367-residue protein sequence, read N- to C-terminus: 3-dehydroquinate synthase (367 aa).

NAD(+)-binding positions include 108–112 (GVIGD), 132–133 (TT), lysine 145, and lysine 154. Zn(2+) contacts are provided by glutamate 187, histidine 249, and histidine 267.

The protein belongs to the sugar phosphate cyclases superfamily. Dehydroquinate synthase family. Requires Co(2+) as cofactor. The cofactor is Zn(2+). It depends on NAD(+) as a cofactor.

It is found in the cytoplasm. It carries out the reaction 7-phospho-2-dehydro-3-deoxy-D-arabino-heptonate = 3-dehydroquinate + phosphate. It participates in metabolic intermediate biosynthesis; chorismate biosynthesis; chorismate from D-erythrose 4-phosphate and phosphoenolpyruvate: step 2/7. Functionally, catalyzes the conversion of 3-deoxy-D-arabino-heptulosonate 7-phosphate (DAHP) to dehydroquinate (DHQ). This Paracoccus denitrificans (strain Pd 1222) protein is 3-dehydroquinate synthase.